Reading from the N-terminus, the 521-residue chain is Bifunctional dihydrofolate reductase-thymidylate synthase (521 aa).

Residues 22–232 form the DHFR domain; the sequence is AFSLVVAVDE…TKYYFEKLIP (211 aa). V26 serves as a coordination point for substrate. Residues A28 and 34–40 each bind NADP(+); that span reads GIGDGRS. Residue D48 participates in substrate binding. NADP(+) contacts are provided by residues 78–80 and 99–102; these read RKT and LSST. Substrate is bound by residues I154, Y160, and T178. An NADP(+)-binding site is contributed by 155-162; sequence GGGSVYAE. Positions 237–521 are thymidylate synthase; sequence EEQYLSLVDR…YPPISMKMAV (285 aa). DUMP is bound at residue R257. Residue C403 is part of the active site. Residues H404, 422 to 426, N434, and 464 to 466 contribute to the dUMP site; these read QRSCD and HVY.

It in the N-terminal section; belongs to the dihydrofolate reductase family. This sequence in the C-terminal section; belongs to the thymidylate synthase family. Homodimer.

The enzyme catalyses (6S)-5,6,7,8-tetrahydrofolate + NADP(+) = 7,8-dihydrofolate + NADPH + H(+). It carries out the reaction dUMP + (6R)-5,10-methylene-5,6,7,8-tetrahydrofolate = 7,8-dihydrofolate + dTMP. It functions in the pathway cofactor biosynthesis; tetrahydrofolate biosynthesis; 5,6,7,8-tetrahydrofolate from 7,8-dihydrofolate: step 1/1. Bifunctional enzyme. Involved in de novo dTMP biosynthesis. Key enzyme in folate metabolism. Catalyzes an essential reaction for de novo glycine and purine synthesis, DNA precursor synthesis, and for the conversion of dUMP to dTMP. The protein is Bifunctional dihydrofolate reductase-thymidylate synthase of Trypanosoma cruzi.